Reading from the N-terminus, the 350-residue chain is Serine-threonine kinase receptor-associated protein (350 aa).

7 WD repeats span residues 12–56 (GHTR…GTFL), 57–96 (GHKG…ELMT), 98–137 (AHKH…AEPK), 141–179 (GHTS…EVKS), 180–212 (LNFN…HSAV), 221–262 (EAPA…ESYK), and 263–302 (GHFG…TYGL). Phosphoserine is present on residues Ser312, Ser335, and Ser338.

The protein belongs to the WD repeat STRAP family. Part of the core SMN complex that contains SMN1, GEMIN2/SIP1, DDX20/GEMIN3, GEMIN4, GEMIN5, GEMIN6, GEMIN7, GEMIN8 and STRAP/UNRIP. Part of the SMN-Sm complex that contains SMN1, GEMIN2/SIP1, DDX20/GEMIN3, GEMIN4, GEMIN5, GEMIN6, GEMIN7, GEMIN8, STRAP/UNRIP and the Sm proteins SNRPB, SNRPD1, SNRPD2, SNRPD3, SNRPE, SNRPF and SNRPG. Associates with the SMN complex in the cytoplasm but not in the nucleus. Interacts with GEMIN6; the interaction is direct. Interacts with GEMIN7; the interaction is direct. Interacts with CSDE1/UNR and MAWBP. Interacts with PDPK1. Interacts with TRIM48.

It localises to the cytoplasm. Its subcellular location is the nucleus. Its function is as follows. The SMN complex catalyzes the assembly of small nuclear ribonucleoproteins (snRNPs), the building blocks of the spliceosome, and thereby plays an important role in the splicing of cellular pre-mRNAs. Most spliceosomal snRNPs contain a common set of Sm proteins SNRPB, SNRPD1, SNRPD2, SNRPD3, SNRPE, SNRPF and SNRPG that assemble in a heptameric protein ring on the Sm site of the small nuclear RNA to form the core snRNP (Sm core). In the cytosol, the Sm proteins SNRPD1, SNRPD2, SNRPE, SNRPF and SNRPG are trapped in an inactive 6S pICln-Sm complex by the chaperone CLNS1A that controls the assembly of the core snRNP. To assemble core snRNPs, the SMN complex accepts the trapped 5Sm proteins from CLNS1A forming an intermediate. Binding of snRNA inside 5Sm triggers eviction of the SMN complex, thereby allowing binding of SNRPD3 and SNRPB to complete assembly of the core snRNP. STRAP plays a role in the cellular distribution of the SMN complex. Negatively regulates TGF-beta signaling but positively regulates the PDPK1 kinase activity by enhancing its autophosphorylation and by significantly reducing the association of PDPK1 with 14-3-3 protein. In Homo sapiens (Human), this protein is Serine-threonine kinase receptor-associated protein (STRAP).